Consider the following 609-residue polypeptide: Hemagglutinin glycoprotein (609 aa).

At 1–34 (MSSPRDRVNAFYKDNLQFKNTRVVLNKEQLLIER) the chain is on the intravirion side. Residues 35 to 58 (PYMLLAVLFVMFLSLVGLLAIAGI) form a helical; Signal-anchor for type II membrane protein membrane-spanning segment. Residues 59–609 (RLHRAAVNTA…VGIEITCNSR (551 aa)) lie on the Virion surface side of the membrane. Asparagine 168, asparagine 200, asparagine 215, and asparagine 395 each carry an N-linked (GlcNAc...) asparagine; by host glycan.

The protein belongs to the paramyxoviruses hemagglutinin-neuraminidase family. Non-sialidase subfamily.

The protein localises to the virion membrane. It localises to the host membrane. Attaches the virus to cell receptors and thereby initiating infection. Binding of H protein to the receptor induces a conformational change that allows the F protein to trigger virion/cell membranes fusion. Down-regulates human MCP/CD46 cell surface expression. In Rinderpest virus (strain L) (RDV), this protein is Hemagglutinin glycoprotein (H).